We begin with the raw amino-acid sequence, 159 residues long: 2-C-methyl-D-erythritol 2,4-cyclodiphosphate synthase (159 aa).

The a divalent metal cation site is built by D8 and H10. 4-CDP-2-C-methyl-D-erythritol 2-phosphate-binding positions include 8–10 (DVH) and 34–35 (HS). An a divalent metal cation-binding site is contributed by H42. 4-CDP-2-C-methyl-D-erythritol 2-phosphate contacts are provided by residues 56–58 (DIG), 61–65 (FPDTD), 100–106 (AQAPRML), 132–135 (TTTE), F139, and R142.

It belongs to the IspF family. In terms of assembly, homotrimer. A divalent metal cation is required as a cofactor.

The enzyme catalyses 4-CDP-2-C-methyl-D-erythritol 2-phosphate = 2-C-methyl-D-erythritol 2,4-cyclic diphosphate + CMP. Its pathway is isoprenoid biosynthesis; isopentenyl diphosphate biosynthesis via DXP pathway; isopentenyl diphosphate from 1-deoxy-D-xylulose 5-phosphate: step 4/6. Involved in the biosynthesis of isopentenyl diphosphate (IPP) and dimethylallyl diphosphate (DMAPP), two major building blocks of isoprenoid compounds. Catalyzes the conversion of 4-diphosphocytidyl-2-C-methyl-D-erythritol 2-phosphate (CDP-ME2P) to 2-C-methyl-D-erythritol 2,4-cyclodiphosphate (ME-CPP) with a corresponding release of cytidine 5-monophosphate (CMP). The protein is 2-C-methyl-D-erythritol 2,4-cyclodiphosphate synthase of Escherichia coli O45:K1 (strain S88 / ExPEC).